A 384-amino-acid chain; its full sequence is Lipid-A-disaccharide synthase 1 (384 aa).

This sequence belongs to the LpxB family.

The enzyme catalyses a lipid X + a UDP-2-N,3-O-bis[(3R)-3-hydroxyacyl]-alpha-D-glucosamine = a lipid A disaccharide + UDP + H(+). Its pathway is bacterial outer membrane biogenesis; LPS lipid A biosynthesis. Functionally, condensation of UDP-2,3-diacylglucosamine and 2,3-diacylglucosamine-1-phosphate to form lipid A disaccharide, a precursor of lipid A, a phosphorylated glycolipid that anchors the lipopolysaccharide to the outer membrane of the cell. The chain is Lipid-A-disaccharide synthase 1 from Legionella pneumophila (strain Paris).